A 730-amino-acid chain; its full sequence is MSKNSEFINLSFLLDHEKEMILGVLKRDEYLKKVEDKRIRKLKNELLEAKRRSGKTQQEASRVCVHCHRNLGLIFDRGDPCQACSLRVCRECRVAGPNGSWKCTVCDKIAQLRIITGEWFFEEKAKRFKQVNVLGTDVVRQSILRRSPGAEEVQSQEQTRQDAEKSDTSPVAGKKASHDGPKRKGFLLSKFRSATRGEIITPKTDTGRSYSLDLDGQHFRSLKSPPGSDRGSTGSSDLNDQEPGPRTPKSSRSNGVTPGTQSSPAPSTRTVTSVISREYGFENSMDLAAIEGTSQELTKSHRRNTSGTPSIAVSGTSLSSDQSRSELDLSESFTEDSEDTVSIRSKSVPGALDKDSLEETEESIDALVSSQLSTNTHRLASGLSTTSLNSMMSVYSETGDYGNVKVSGEILLHISYCYKTGGLYIFVKNCRNLAIGDEKKQRTDAYVKSYLLPDKSRNNKRKTKIRTGTNPEFNETLKYTISHTQLETRTLQLSVWHYDRFGRNSFLGEVEIPFDSWNFENPTDEWFVLQPKVEFAPDIGLQYKGELTVVLRYIPPEENLMLPPEQLQGNKTFKKGKKKESPVISGGILEVFIKEAKNLTAVKSGGTSDSFVKGYLLPDDSKATKHKTLVIKKSVNPQWNHTFMFSGIHPQDIKNVCLELTIWDKEAFSSNIFLGGVRLNSGSGVSHGKNVDWMDSQGEEQRLWQKMANNPGTPFEGVLMLRSSMGKCRL.

Residues 7 to 123 (FINLSFLLDH…IITGEWFFEE (117 aa)) form the RabBD domain. The FYVE-type zinc finger occupies 64 to 106 (CVHCHRNLGLIFDRGDPCQACSLRVCRECRVAGPNGSWKCTVC). Serine 147 is subject to Phosphoserine. Disordered stretches follow at residues 147-188 (SPGA…GFLL), 217-271 (QHFR…TRTV), and 294-355 (SQEL…LDKD). Composition is skewed to polar residues over residues 248 to 271 (PKSS…TRTV) and 305 to 322 (TSGT…SSDQ). C2 domains follow at residues 406–527 (VSGE…DEWF) and 563–694 (PPEQ…VDWM).

In terms of assembly, binds RAB27A that has been activated by GTP-binding, and possibly also RAB3A and RAB6A. In terms of tissue distribution, highly expressed in placenta and liver.

Its subcellular location is the membrane. In terms of biological role, may act as Rab effector protein and play a role in vesicle trafficking. Binds phospholipids. This chain is Synaptotagmin-like protein 5 (SYTL5), found in Homo sapiens (Human).